We begin with the raw amino-acid sequence, 240 residues long: ATP-dependent Clp protease proteolytic subunit 2 (240 aa).

Serine 132 acts as the Nucleophile in catalysis. The active site involves histidine 157.

This sequence belongs to the peptidase S14 family. In terms of assembly, fourteen ClpP subunits assemble into 2 heptameric rings which stack back to back to give a disk-like structure with a central cavity, resembling the structure of eukaryotic proteasomes.

The protein localises to the cytoplasm. It catalyses the reaction Hydrolysis of proteins to small peptides in the presence of ATP and magnesium. alpha-casein is the usual test substrate. In the absence of ATP, only oligopeptides shorter than five residues are hydrolyzed (such as succinyl-Leu-Tyr-|-NHMec, and Leu-Tyr-Leu-|-Tyr-Trp, in which cleavage of the -Tyr-|-Leu- and -Tyr-|-Trp bonds also occurs).. Functionally, cleaves peptides in various proteins in a process that requires ATP hydrolysis. Has a chymotrypsin-like activity. Plays a major role in the degradation of misfolded proteins. This Synechococcus elongatus (strain ATCC 33912 / PCC 7942 / FACHB-805) (Anacystis nidulans R2) protein is ATP-dependent Clp protease proteolytic subunit 2.